The primary structure comprises 158 residues: Pyruvoyl-dependent arginine decarboxylase (158 aa).

Serine 44 is subject to Pyruvic acid (Ser).

The protein belongs to the PdaD family. It depends on pyruvate as a cofactor.

It carries out the reaction L-arginine + H(+) = agmatine + CO2. This is Pyruvoyl-dependent arginine decarboxylase from Pyrococcus abyssi (strain GE5 / Orsay).